Here is a 114-residue protein sequence, read N- to C-terminus: Beta-microseminoprotein (114 aa).

An N-terminal signal peptide occupies residues 1 to 20 (MNVLLGSVVIFATFVTLCNA). Cystine bridges form between Cys22–Cys70, Cys38–Cys62, Cys57–Cys93, Cys60–Cys69, and Cys84–Cys107.

The protein belongs to the beta-microseminoprotein family. In terms of assembly, homodimer; Interacts with PI16. Strongly expressed in prostate, liver, kidney, breast and penis. Also expressed in pancreas, esophagus, stomach, deodenum, colon, trachea, lung, salivary glands and fallopian tube. PSP94 is expressed in lung and breast, whereas PSP57 is found in kidney and bladder.

It is found in the secreted. The sequence is that of Beta-microseminoprotein (MSMB) from Homo sapiens (Human).